Consider the following 545-residue polypeptide: CTP synthase (545 aa).

Residues 1–265 are amidoligase domain; sequence MSKYIFVTGG…DDLVVQNLGL (265 aa). Serine 13 serves as a coordination point for CTP. Residue serine 13 coordinates UTP. Residues 14 to 19 and aspartate 71 each bind ATP; that span reads SLGKGA. Residues aspartate 71 and glutamate 139 each contribute to the Mg(2+) site. CTP is bound by residues 146 to 148, 186 to 191, and lysine 222; these read DIE and KTKPTQ. UTP contacts are provided by residues 186-191 and lysine 222; that span reads KTKPTQ. A Glutamine amidotransferase type-1 domain is found at 290–541; it reads VIALVGKYVG…MRAAIAQRER (252 aa). An L-glutamine-binding site is contributed by glycine 351. Cysteine 378 (nucleophile; for glutamine hydrolysis) is an active-site residue. L-glutamine contacts are provided by residues 379-382, glutamate 402, and arginine 469; that span reads LGMQ. Catalysis depends on residues histidine 514 and glutamate 516.

Belongs to the CTP synthase family. As to quaternary structure, homotetramer.

It catalyses the reaction UTP + L-glutamine + ATP + H2O = CTP + L-glutamate + ADP + phosphate + 2 H(+). The enzyme catalyses L-glutamine + H2O = L-glutamate + NH4(+). It carries out the reaction UTP + NH4(+) + ATP = CTP + ADP + phosphate + 2 H(+). The protein operates within pyrimidine metabolism; CTP biosynthesis via de novo pathway; CTP from UDP: step 2/2. With respect to regulation, allosterically activated by GTP, when glutamine is the substrate; GTP has no effect on the reaction when ammonia is the substrate. The allosteric effector GTP functions by stabilizing the protein conformation that binds the tetrahedral intermediate(s) formed during glutamine hydrolysis. Inhibited by the product CTP, via allosteric rather than competitive inhibition. Functionally, catalyzes the ATP-dependent amination of UTP to CTP with either L-glutamine or ammonia as the source of nitrogen. Regulates intracellular CTP levels through interactions with the four ribonucleotide triphosphates. This chain is CTP synthase, found in Acidithiobacillus ferrooxidans (strain ATCC 23270 / DSM 14882 / CIP 104768 / NCIMB 8455) (Ferrobacillus ferrooxidans (strain ATCC 23270)).